Here is a 203-residue protein sequence, read N- to C-terminus: Recombination protein RecR (203 aa).

The C4-type zinc finger occupies 56–71; sequence CSVCGNVSDEERCRIC. Residues 79–179 enclose the Toprim domain; that stretch reads SLVCVVEEPK…TVTRIASGLP (101 aa).

The protein belongs to the RecR family.

In terms of biological role, may play a role in DNA repair. It seems to be involved in an RecBC-independent recombinational process of DNA repair. It may act with RecF and RecO. The chain is Recombination protein RecR from Mycolicibacterium smegmatis (strain ATCC 700084 / mc(2)155) (Mycobacterium smegmatis).